Consider the following 347-residue polypeptide: NADH-ubiquinone oxidoreductase chain 2 (347 aa).

Transmembrane regions (helical) follow at residues 4–21 (LILS…LIVM), 26–45 (WLMV…PVLM), 59–79 (YFLT…INLI), 96–116 (IIMT…FWVP), 122–142 (IQLS…MSIL), 148–168 (AINM…GGWG), 201–221 (ALLN…TFML), 242–262 (TTIL…GFLP), 274–294 (DSII…YFYM), and 326–346 (LPPL…LMLL).

The protein belongs to the complex I subunit 2 family. In terms of assembly, core subunit of respiratory chain NADH dehydrogenase (Complex I) which is composed of 45 different subunits. Interacts with TMEM242.

The protein resides in the mitochondrion inner membrane. It carries out the reaction a ubiquinone + NADH + 5 H(+)(in) = a ubiquinol + NAD(+) + 4 H(+)(out). Core subunit of the mitochondrial membrane respiratory chain NADH dehydrogenase (Complex I) which catalyzes electron transfer from NADH through the respiratory chain, using ubiquinone as an electron acceptor. Essential for the catalytic activity and assembly of complex I. The polypeptide is NADH-ubiquinone oxidoreductase chain 2 (Syconycteris australis (Southern blossom bat)).